A 79-amino-acid polypeptide reads, in one-letter code: MKTQVLAVFVLCVLFCLAESRTTLNKRIDIAKRIECKCKGDAPDLSHMTGTVYFSCKGGDGSWSKCNTYTAVADCCHQA.

The first 20 residues, Met1–Ser20, serve as a signal peptide directing secretion. Residues Arg21–Ala31 constitute a propeptide that is removed on maturation. 3 cysteine pairs are disulfide-bonded: Cys36/Cys75, Cys38/Cys66, and Cys56/Cys76.

Belongs to the sea anemone sodium channel inhibitory toxin family.

The protein localises to the secreted. The protein resides in the nematocyst. In terms of biological role, in neuromuscular preparation of crustaceans, the toxin increased neurotransmitter release, causing repetitive firing of the axons. May affect sodium channels (Nav). The polypeptide is Delta-hormotoxin-Cpt1a (Calliactis parasitica (Sea anemone)).